A 236-amino-acid polypeptide reads, in one-letter code: Uridylate kinase (236 aa).

ATP is bound at residue 10-13 (KLSG). A UMP-binding site is contributed by Gly52. ATP contacts are provided by Gly53 and Arg57. UMP contacts are provided by residues Asp72 and 133–140 (TGNPFFTT). The ATP site is built by Thr160, Tyr166, and Asp169.

The protein belongs to the UMP kinase family. As to quaternary structure, homohexamer.

It is found in the cytoplasm. It carries out the reaction UMP + ATP = UDP + ADP. The protein operates within pyrimidine metabolism; CTP biosynthesis via de novo pathway; UDP from UMP (UMPK route): step 1/1. Its activity is regulated as follows. Inhibited by UTP. In terms of biological role, catalyzes the reversible phosphorylation of UMP to UDP. The chain is Uridylate kinase from Polaromonas naphthalenivorans (strain CJ2).